The chain runs to 227 residues: Ribosomal RNA small subunit methyltransferase G (227 aa).

Residues Gly-74, Leu-79, 124–125 (AE), and Arg-142 each bind S-adenosyl-L-methionine.

This sequence belongs to the methyltransferase superfamily. RNA methyltransferase RsmG family.

It is found in the cytoplasm. Its function is as follows. Specifically methylates the N7 position of guanine in position 518 of 16S rRNA. This is Ribosomal RNA small subunit methyltransferase G from Mycolicibacterium gilvum (strain PYR-GCK) (Mycobacterium gilvum (strain PYR-GCK)).